The primary structure comprises 124 residues: Iron-sulfur cluster insertion protein ErpA (124 aa).

Residues cysteine 52, cysteine 116, and cysteine 118 each contribute to the iron-sulfur cluster site.

It belongs to the HesB/IscA family. In terms of assembly, homodimer. Iron-sulfur cluster is required as a cofactor.

Functionally, required for insertion of 4Fe-4S clusters for at least IspG. In Vibrio atlanticus (strain LGP32) (Vibrio splendidus (strain Mel32)), this protein is Iron-sulfur cluster insertion protein ErpA.